A 115-amino-acid polypeptide reads, in one-letter code: NADH-ubiquinone oxidoreductase chain 3 (115 aa).

A run of 3 helical transmembrane segments spans residues 3–23 (LMLT…IAFW), 55–75 (FFLV…LLPL), and 86–106 (TMLT…AYEW).

Belongs to the complex I subunit 3 family. Core subunit of respiratory chain NADH dehydrogenase (Complex I) which is composed of 45 different subunits. Interacts with TMEM186. Interacts with TMEM242.

Its subcellular location is the mitochondrion inner membrane. It catalyses the reaction a ubiquinone + NADH + 5 H(+)(in) = a ubiquinol + NAD(+) + 4 H(+)(out). Functionally, core subunit of the mitochondrial membrane respiratory chain NADH dehydrogenase (Complex I) which catalyzes electron transfer from NADH through the respiratory chain, using ubiquinone as an electron acceptor. Essential for the catalytic activity of complex I. The protein is NADH-ubiquinone oxidoreductase chain 3 of Ceratotherium simum (White rhinoceros).